Reading from the N-terminus, the 283-residue chain is tRNA (guanine-N(1)-)-methyltransferase (283 aa).

Residues glycine 113 and 133 to 138 (IGDYVL) contribute to the S-adenosyl-L-methionine site.

The protein belongs to the RNA methyltransferase TrmD family. In terms of assembly, homodimer.

The protein localises to the cytoplasm. The enzyme catalyses guanosine(37) in tRNA + S-adenosyl-L-methionine = N(1)-methylguanosine(37) in tRNA + S-adenosyl-L-homocysteine + H(+). In terms of biological role, specifically methylates guanosine-37 in various tRNAs. This is tRNA (guanine-N(1)-)-methyltransferase from Parafrankia sp. (strain EAN1pec).